A 243-amino-acid polypeptide reads, in one-letter code: Pyridoxine 5'-phosphate synthase (243 aa).

Asparagine 9 is a binding site for 3-amino-2-oxopropyl phosphate. Aspartate 11–histidine 12 serves as a coordination point for 1-deoxy-D-xylulose 5-phosphate. Arginine 20 lines the 3-amino-2-oxopropyl phosphate pocket. Catalysis depends on histidine 45, which acts as the Proton acceptor. Residues arginine 47 and histidine 52 each coordinate 1-deoxy-D-xylulose 5-phosphate. Glutamate 72 functions as the Proton acceptor in the catalytic mechanism. 1-deoxy-D-xylulose 5-phosphate is bound at residue threonine 102. Histidine 193 acts as the Proton donor in catalysis. 3-amino-2-oxopropyl phosphate-binding positions include glycine 194 and glycine 215–histidine 216.

It belongs to the PNP synthase family. As to quaternary structure, homooctamer; tetramer of dimers.

The protein localises to the cytoplasm. The enzyme catalyses 3-amino-2-oxopropyl phosphate + 1-deoxy-D-xylulose 5-phosphate = pyridoxine 5'-phosphate + phosphate + 2 H2O + H(+). The protein operates within cofactor biosynthesis; pyridoxine 5'-phosphate biosynthesis; pyridoxine 5'-phosphate from D-erythrose 4-phosphate: step 5/5. Its function is as follows. Catalyzes the complicated ring closure reaction between the two acyclic compounds 1-deoxy-D-xylulose-5-phosphate (DXP) and 3-amino-2-oxopropyl phosphate (1-amino-acetone-3-phosphate or AAP) to form pyridoxine 5'-phosphate (PNP) and inorganic phosphate. The protein is Pyridoxine 5'-phosphate synthase of Salmonella paratyphi A (strain ATCC 9150 / SARB42).